The sequence spans 478 residues: 9-divinyl ether synthase (478 aa).

C431 contacts heme.

Belongs to the cytochrome P450 family. 9-divinyl ether synthase subfamily.

The catalysed reaction is (9S)-hydroperoxy-(10E,12Z)-octadecadienoate = colneleate + H2O. Its function is as follows. Involved in the biosynthesis of the anti-fungal toxins colneleic acid and colnelenic acid. This Capsicum annuum (Capsicum pepper) protein is 9-divinyl ether synthase (DES).